The chain runs to 262 residues: Putative hydro-lyase Cbei_2760 (262 aa).

Belongs to the D-glutamate cyclase family.

The polypeptide is Putative hydro-lyase Cbei_2760 (Clostridium beijerinckii (strain ATCC 51743 / NCIMB 8052) (Clostridium acetobutylicum)).